A 532-amino-acid chain; its full sequence is D-arabinono-1,4-lactone oxidase (532 aa).

In terms of domain architecture, FAD-binding PCMH-type spans 25 to 199 (YSARPRLYFQ…VRATIRVVPA (175 aa)). His62 is modified (pros-8alpha-FAD histidine).

Belongs to the oxygen-dependent FAD-linked oxidoreductase family. The cofactor is FAD.

The protein resides in the mitochondrion membrane. It catalyses the reaction D-arabinono-1,4-lactone + O2 = dehydro-D-arabinono-1,4-lactone + H2O2 + H(+). The protein operates within cofactor biosynthesis; D-erythroascorbate biosynthesis; dehydro-D-arabinono-1,4-lactone from D-arabinose: step 2/2. The protein is D-arabinono-1,4-lactone oxidase (ALO1) of Eremothecium gossypii (strain ATCC 10895 / CBS 109.51 / FGSC 9923 / NRRL Y-1056) (Yeast).